A 466-amino-acid polypeptide reads, in one-letter code: Reticulophagy regulator 3 (466 aa).

The Cytoplasmic portion of the chain corresponds to 1-80; sequence MEEAEGVAAA…WCLGLNAAFW (80 aa). Position 26 is a phosphoserine (Ser26). Residues 81-101 form a helical membrane-spanning segment; the sequence is FFALTSLRFVFLLAFSLMIIV. Topologically, residues 102-168 are lumenal; it reads CIDQWKNKIW…LLFKKQNPGK (67 aa). The chain crosses the membrane as a helical span at residues 169–187; the sequence is FCLLSCGVLTFLAMLGRYI. Over 188-192 the chain is Cytoplasmic; the sequence is PGLLL. Residues 193–211 traverse the membrane as a helical segment; sequence SYLMLVIIMMWPLAVYHRL. Over 212-381 the chain is Lumenal; that stretch reads WDRAYVRLKP…ASRNEAALPE (170 aa). The disordered stretch occupies residues 244–263; the sequence is RRRALHSERATDSHSDSEEE. Over residues 248–259 the composition is skewed to basic and acidic residues; it reads LHSERATDSHSD. A Phosphothreonine modification is found at Thr254. Phosphoserine occurs at positions 258 and 260. Thr283 carries the phosphothreonine modification. Ser285, Ser288, Ser293, and Ser303 each carry phosphoserine. Residues 285–335 form a disordered region; sequence SEHSDAEVSCTENGTFNLSRGQTPLTEGSEDLDGHSDPEESFARDLPDFPS. A compositionally biased stretch (polar residues) spans 294-310; sequence CTENGTFNLSRGQTPLT. Residues Thr307 and Thr310 each carry the phosphothreonine modification. 3 positions are modified to phosphoserine: Ser313, Ser320, and Ser360. The span at 316-331 shows a compositional bias: basic and acidic residues; the sequence is LDGHSDPEESFARDLP. Residues 382–401 form a helical membrane-spanning segment; it reads LLLSSLPGGSNLTSNLASLV. Residues 402 to 466 lie on the Cytoplasmic side of the membrane; that stretch reads SQGMIQLALS…QLDPASSRSH (65 aa). A disordered region spans residues 412–444; sequence EASQTDPSGPPPRRATRGFLRAPSSDLDTDAEG. Position 440 is a phosphothreonine (Thr440). An LIR motif motif is present at residues 445–450; the sequence is DDFELL.

The protein belongs to the RETREG family. As to quaternary structure, interacts with ATG8 family modifier proteins MAP1LC3A, MAP1LC3B, GABARAPL1 and GABARAPL2. Also interacts with ATG8 family modifier protein GABARAP. Interacts with CANX. Interacts with RTN4 isoform B. As to expression, widely expressed with highest levels in brain, lung, liver, muscle and spleen (protein level). Mainly expressed in the central nervous system and in parenchymatous organs including liver, lung and kidney.

The protein resides in the endoplasmic reticulum membrane. Functionally, endoplasmic reticulum (ER)-anchored autophagy regulator which exists in an inactive state under basal conditions but is activated following cellular stress. When activated, induces ER fragmentation and mediates ER delivery into lysosomes through sequestration into autophagosomes via interaction with ATG8 family proteins. Promotes ER membrane curvature and ER tubulation required for subsequent ER fragmentation and engulfment into autophagosomes. Required for collagen quality control in a LIR motif-dependent manner. Mediates NRF1-enhanced neurite outgrowth. The polypeptide is Reticulophagy regulator 3 (Retreg3) (Mus musculus (Mouse)).